The following is a 446-amino-acid chain: C4-dicarboxylate transport protein (446 aa).

Helical transmembrane passes span 25-45 (VQVL…PAIG), 58-78 (LVKM…IASI), 93-113 (FAYF…VANV), 159-179 (ALTE…GLAL), 199-219 (VFFG…FGAM), 236-256 (LLIA…LGAV), 322-342 (IYMT…LSLG), 370-390 (AATL…ILGI), and 400-420 (LTNF…EKGL).

Belongs to the dicarboxylate/amino acid:cation symporter (DAACS) (TC 2.A.23) family.

Its subcellular location is the cell inner membrane. Functionally, responsible for the transport of dicarboxylates such as succinate, fumarate, and malate from the periplasm across the membrane. This chain is C4-dicarboxylate transport protein, found in Sphingopyxis alaskensis (strain DSM 13593 / LMG 18877 / RB2256) (Sphingomonas alaskensis).